A 348-amino-acid polypeptide reads, in one-letter code: Photosystem II protein D1 (348 aa).

A run of 3 helical transmembrane segments spans residues 33 to 50 (YIGW…LATV), 122 to 137 (HFIL…EWEF), and 146 to 160 (WIFV…AASA). H122 serves as a coordination point for chlorophyll a. Y130 provides a ligand contact to pheophytin a. [CaMn4O5] cluster contacts are provided by D174 and E193. Residues 201–222 (FHILGVAAVFGGSLFSAMHGSL) form a helical membrane-spanning segment. Chlorophyll a is bound at residue H202. A quinone contacts are provided by residues H219 and 268 to 269 (SF). Fe cation is bound at residue H219. A Fe cation-binding site is contributed by H276. A helical membrane pass occupies residues 278–292 (FLAAWPVIGIWFTAL). 4 residues coordinate [CaMn4O5] cluster: H336, E337, D346, and A348.

It belongs to the reaction center PufL/M/PsbA/D family. PSII is composed of 1 copy each of membrane proteins PsbA, PsbB, PsbC, PsbD, PsbE, PsbF, PsbH, PsbI, PsbJ, PsbK, PsbL, PsbM, PsbT, PsbX, PsbY, PsbZ, Psb30/Ycf12, at least 3 peripheral proteins of the oxygen-evolving complex and a large number of cofactors. It forms dimeric complexes. The cofactor is The D1/D2 heterodimer binds P680, chlorophylls that are the primary electron donor of PSII, and subsequent electron acceptors. It shares a non-heme iron and each subunit binds pheophytin, quinone, additional chlorophylls, carotenoids and lipids. D1 provides most of the ligands for the Mn4-Ca-O5 cluster of the oxygen-evolving complex (OEC). There is also a Cl(-1) ion associated with D1 and D2, which is required for oxygen evolution. The PSII complex binds additional chlorophylls, carotenoids and specific lipids.. In terms of processing, tyr-165 forms a radical intermediate that is referred to as redox-active TyrZ, YZ or Y-Z.

It is found in the plastid. The protein resides in the chloroplast thylakoid membrane. The enzyme catalyses 2 a plastoquinone + 4 hnu + 2 H2O = 2 a plastoquinol + O2. Photosystem II (PSII) is a light-driven water:plastoquinone oxidoreductase that uses light energy to abstract electrons from H(2)O, generating O(2) and a proton gradient subsequently used for ATP formation. It consists of a core antenna complex that captures photons, and an electron transfer chain that converts photonic excitation into a charge separation. The D1/D2 (PsbA/PsbD) reaction center heterodimer binds P680, the primary electron donor of PSII as well as several subsequent electron acceptors. The protein is Photosystem II protein D1 of Heterocapsa pygmaea (Dinoflagellate).